Here is a 240-residue protein sequence, read N- to C-terminus: Ubiquinone biosynthesis O-methyltransferase (240 aa).

Residues arginine 44, glycine 64, aspartate 85, and methionine 129 each contribute to the S-adenosyl-L-methionine site.

The protein belongs to the methyltransferase superfamily. UbiG/COQ3 family.

The enzyme catalyses a 3-demethylubiquinol + S-adenosyl-L-methionine = a ubiquinol + S-adenosyl-L-homocysteine + H(+). It catalyses the reaction a 3-(all-trans-polyprenyl)benzene-1,2-diol + S-adenosyl-L-methionine = a 2-methoxy-6-(all-trans-polyprenyl)phenol + S-adenosyl-L-homocysteine + H(+). Its pathway is cofactor biosynthesis; ubiquinone biosynthesis. O-methyltransferase that catalyzes the 2 O-methylation steps in the ubiquinone biosynthetic pathway. The protein is Ubiquinone biosynthesis O-methyltransferase of Shigella flexneri serotype 5b (strain 8401).